An 88-amino-acid polypeptide reads, in one-letter code: ATP synthase F(0) complex subunit f, mitochondrial (88 aa).

Ala2 is modified (N-acetylalanine). Phosphoserine is present on Ser3. The residue at position 16 (Lys16) is an N6-acetyllysine. A helical transmembrane segment spans residues 62 to 79; it reads MVLAAYVFLNYCRSYKEL.

Component of the ATP synthase complex composed at least of ATP5F1A/subunit alpha, ATP5F1B/subunit beta, ATP5MC1/subunit c (homooctomer), MT-ATP6/subunit a, MT-ATP8/subunit 8, ATP5ME/subunit e, ATP5MF/subunit f, ATP5MG/subunit g, ATP5MK/subunit k, ATP5MJ/subunit j, ATP5F1C/subunit gamma, ATP5F1D/subunit delta, ATP5F1E/subunit epsilon, ATP5PF/subunit F6, ATP5PB/subunit b, ATP5PD/subunit d, ATP5PO/subunit OSCP. ATP synthase complex consists of a soluble F(1) head domain (subunits alpha(3) and beta(3)) - the catalytic core - and a membrane F(0) domain - the membrane proton channel (subunits c, a, 8, e, f, g, k and j). These two domains are linked by a central stalk (subunits gamma, delta, and epsilon) rotating inside the F1 region and a stationary peripheral stalk (subunits F6, b, d, and OSCP).

Its subcellular location is the mitochondrion. It is found in the mitochondrion inner membrane. In terms of biological role, subunit f, of the mitochondrial membrane ATP synthase complex (F(1)F(0) ATP synthase or Complex V) that produces ATP from ADP in the presence of a proton gradient across the membrane which is generated by electron transport complexes of the respiratory chain. ATP synthase complex consist of a soluble F(1) head domain - the catalytic core - and a membrane F(1) domain - the membrane proton channel. These two domains are linked by a central stalk rotating inside the F(1) region and a stationary peripheral stalk. During catalysis, ATP synthesis in the catalytic domain of F(1) is coupled via a rotary mechanism of the central stalk subunits to proton translocation. In vivo, can only synthesize ATP although its ATP hydrolase activity can be activated artificially in vitro. Part of the complex F(0) domain. The polypeptide is ATP synthase F(0) complex subunit f, mitochondrial (Bos taurus (Bovine)).